The following is a 220-amino-acid chain: UPF0319 protein YccT (220 aa).

Positions 1-20 (MKTGALTTFLALCLPVTVFA) are cleaved as a signal peptide.

Belongs to the UPF0319 family.

In Salmonella dublin (strain CT_02021853), this protein is UPF0319 protein YccT.